Reading from the N-terminus, the 229-residue chain is Probable methylthioribulose-1-phosphate dehydratase (229 aa).

Cys-97 contacts substrate. Zn(2+)-binding residues include His-115 and His-117. Glu-139 (proton donor/acceptor) is an active-site residue. Residue His-195 coordinates Zn(2+).

Belongs to the aldolase class II family. MtnB subfamily. The cofactor is Zn(2+).

The protein localises to the cytoplasm. It carries out the reaction 5-(methylsulfanyl)-D-ribulose 1-phosphate = 5-methylsulfanyl-2,3-dioxopentyl phosphate + H2O. It participates in amino-acid biosynthesis; L-methionine biosynthesis via salvage pathway; L-methionine from S-methyl-5-thio-alpha-D-ribose 1-phosphate: step 2/6. Its function is as follows. Catalyzes the dehydration of methylthioribulose-1-phosphate (MTRu-1-P) into 2,3-diketo-5-methylthiopentyl-1-phosphate (DK-MTP-1-P). The chain is Probable methylthioribulose-1-phosphate dehydratase from Acyrthosiphon pisum (Pea aphid).